A 4008-amino-acid polypeptide reads, in one-letter code: Extracellular matrix organizing protein FRAS1 (4008 aa).

The N-terminal stretch at 1–26 is a signal peptide; that stretch reads MGVLKVWLGLALALAEFAVLPHHSEG. 5 consecutive VWFC domains span residues 27–88, 93–153, 157–217, 219–279, and 283–343; these read ACVY…PECV, GSCH…PVCV, KPCS…PQCS, RSCS…EECV, and GSCS…PECI. Residues 27 to 3901 are Extracellular-facing; the sequence is ACVYQDSLLA…AASLSQTGAS (3875 aa). At Ser344 the chain carries Phosphoserine. A VWFC 6 domain is found at 347-417; the sequence is GYCVYEETGE…VKGQCCPDCT (71 aa). N-linked (GlcNAc...) asparagine glycosylation is present at Asn361. 14 FU repeats span residues 409-460, 462-505, 507-553, 555-599, 602-647, 649-705, 708-753, 755-800, 803-852, 854-900, 903-948, 952-997, 999-1042, and 1046-1089; these read KGQC…GFYQ, GSLC…GFYQ, RHSC…GFYN, QGTC…GYYA, TGRC…GFYS, HGVC…HFYL, TGIC…GYFH, EGSC…EQFL, VGYC…GYYA, RGAC…GHYL, NHVC…QYYL, TNTC…SFYQ, SGLC…GYFA, and KHKC…GFSV. Asn728 is a glycosylation site (N-linked (GlcNAc...) asparagine). N-linked (GlcNAc...) asparagine glycans are attached at residues Asn1093 and Asn1108. CSPG repeat units lie at residues 1102–1197, 1217–1308, 1329–1438, 1463–1559, 1595–1689, 1710–1810, and 1833–1936; these read TPSL…LKIS, APYV…LQAN, GLQL…FEVS, APKV…FSFA, PVFQ…ISVT, GPRL…FSVS, and PPVI…FYVS. N-linked (GlcNAc...) asparagine glycosylation occurs at Asn1504. N-linked (GlcNAc...) asparagine glycosylation is present at Asn1777. Asn1948 and Asn1978 each carry an N-linked (GlcNAc...) asparagine glycan. CSPG repeat units lie at residues 1957-2057, 2078-2177, 2199-2291, 2311-2404, and 2439-2536; these read EPPR…FSLT, TPHL…FDVV, PPVI…FTLS, SLPV…FTVS, and TPRI…FLVK. Calx-beta domains lie at 2543-2646, 2659-2770, 2784-2890, 2905-3007, and 3025-3129; these read VSDN…VELS, AKVI…IALA, AKVL…VFLS, IAIN…VYLG, and ATIT…LVLG. N-linked (GlcNAc...) asparagine glycosylation is found at Asn2563, Asn2664, and Asn2682. Residues Asn2908, Asn2985, Asn3070, Asn3218, Asn3676, and Asn3875 are each glycosylated (N-linked (GlcNAc...) asparagine). Residues 3902–3922 traverse the membrane as a helical segment; that stretch reads IGSALAAIMLLLLVFLVACFI. The Cytoplasmic portion of the chain corresponds to 3923-4008; it reads NRKCQKQRKK…HNNLQDGTEV (86 aa).

The protein belongs to the FRAS1 family. Expressed in many adult tissues, with highest levels in kidney, pancreas and thalamus. Relatively high expression was also detected in fetal kidney and heart.

It localises to the cell membrane. Functionally, involved in extracellular matrix organization. Required for the regulation of epidermal-basement membrane adhesion responsible for proper organogenesis during embryonic development. Involved in brain organization and function. This chain is Extracellular matrix organizing protein FRAS1, found in Homo sapiens (Human).